We begin with the raw amino-acid sequence, 345 residues long: MCSVLAIALVVALLGDMHPGVKSSTTSAVTSPSNTTVTSTTSISTSNNVTSAVTTTVQTSTSSASTSVIATTQKEGHLYTVNCEASYSHDQVSLNATCKVILLNNTKNPDILSVTCYARTDCKGPFTQVGYLSAFPPDNEGKLHLSYNATAQELLISGLRPQETTEYTCSFFSWGRHHNATWDLFTYPIYAVYGTRLNATTMRVRVLLQEHEHCLLNGSSLYHPNSTVHLHQGNQLIPPWNISNVTYNGQRLREFVFYLNGTYTVVRLHVQIAGRSFTTTYVFIKSDPLFEDRLLAYGVLAFLVFMVIILLYVTYMLARRRDWSYKRLEEPVEEKKHPVPYFKQW.

A signal peptide spans 1 to 23 (MCSVLAIALVVALLGDMHPGVKS). The segment at 23-42 (SSTTSAVTSPSNTTVTSTTS) is disordered. Over 24 to 294 (STTSAVTSPS…KSDPLFEDRL (271 aa)) the chain is Virion surface. Asparagine 34, asparagine 48, asparagine 95, asparagine 104, asparagine 148, asparagine 179, asparagine 198, asparagine 217, asparagine 225, asparagine 241, asparagine 244, and asparagine 260 each carry an N-linked (GlcNAc...) asparagine; by host glycan. The region spanning 91-190 (QVSLNATCKV…TWDLFTYPIY (100 aa)) is the Ig-like V-type domain. Residues 295–317 (LAYGVLAFLVFMVIILLYVTYML) traverse the membrane as a helical segment. At 318–345 (ARRRDWSYKRLEEPVEEKKHPVPYFKQW) the chain is on the intravirion side.

The protein resides in the virion membrane. Its function is as follows. Serves as a receptor for the Fc part of human IgG. May thus be involved in interfering with host Ig-mediated immune responses. The sequence is that of Viral Fc-gamma receptor-like protein UL119 (UL119/UL118) from Human cytomegalovirus (strain AD169) (HHV-5).